A 243-amino-acid chain; its full sequence is Probable transcriptional regulatory protein Patl_0550 (243 aa).

The protein belongs to the TACO1 family.

It is found in the cytoplasm. The chain is Probable transcriptional regulatory protein Patl_0550 from Pseudoalteromonas atlantica (strain T6c / ATCC BAA-1087).